A 170-amino-acid chain; its full sequence is Ankyrin repeat-containing protein C105.02c (170 aa).

ANK repeat units follow at residues 46–76 (LGND…NLNN) and 81–116 (TGDT…DPLL). A disordered region spans residues 150–170 (SADVVADDDDEEEGSGESDEE). Over residues 154-170 (VADDDDEEEGSGESDEE) the composition is skewed to acidic residues.

It localises to the cytoplasm. The protein localises to the nucleus. This is Ankyrin repeat-containing protein C105.02c from Schizosaccharomyces pombe (strain 972 / ATCC 24843) (Fission yeast).